A 349-amino-acid polypeptide reads, in one-letter code: UPF0284 protein MM_0708 (349 aa).

Belongs to the UPF0284 family.

In Methanosarcina mazei (strain ATCC BAA-159 / DSM 3647 / Goe1 / Go1 / JCM 11833 / OCM 88) (Methanosarcina frisia), this protein is UPF0284 protein MM_0708.